Here is a 332-residue protein sequence, read N- to C-terminus: Fructose-1,6-bisphosphatase class 1 (332 aa).

Mg(2+) contacts are provided by glutamate 89, aspartate 110, leucine 112, and aspartate 113. Substrate-binding positions include 113-116 (DGSS), asparagine 206, tyrosine 239, 257-259 (YLY), and lysine 269. Residue glutamate 275 participates in Mg(2+) binding.

The protein belongs to the FBPase class 1 family. Homotetramer. Mg(2+) serves as cofactor.

It localises to the cytoplasm. The enzyme catalyses beta-D-fructose 1,6-bisphosphate + H2O = beta-D-fructose 6-phosphate + phosphate. It functions in the pathway carbohydrate biosynthesis; gluconeogenesis. This is Fructose-1,6-bisphosphatase class 1 from Escherichia coli O157:H7.